We begin with the raw amino-acid sequence, 373 residues long: Core trichothecene cluster (CTC) protein 14 (373 aa).

The protein belongs to the TRI14 family.

Part of the core gene cluster that mediates the biosynthesis of trichothecenes, a very large family of chemically related bicyclic sesquiterpene compounds acting as mycotoxins, including T2-toxin. The biosynthesis of trichothecenes begins with the cyclization of farnesyl diphosphate to trichodiene and is catalyzed by the trichodiene synthase TRI5. Trichodiene undergoes a series of oxygenations catalyzed by the cytochrome P450 monooxygenase TRI4. TRI4 controls the addition of four oxygens at C-2, C-3, C-11, and the C-12, C-13-epoxide to form the intermediate isotrichotriol. Isotrichotriol then undergoes a non-enzymatic isomerization and cyclization to form isotrichodermol. During this process, the oxygen at the C-2 position becomes the pyran ring oxygen and the hydroxyl group at C-11 is lost. More complex type A trichothecenes are built by modifying isotrichodermol through a series of paired hydroxylation and acetylation or acylation steps. Isotrichodermol is converted to isotrichodermin by the acetyltransferase TRI101. TRI101 encodes a C-3 transacetylase that acts as a self-protection or resistance factor during biosynthesis and that the presence of a free C-3 hydroxyl group is a key component of Fusarium trichothecene phytotoxicity. A second hydroxyl group is added to C-15 by the trichothecene C-15 hydroxylase TRI11, producing 15-decalonectrin, which is then acetylated by TRI3, producing calonectrin. A third hydroxyl group is added at C-4 by the cytochrome P450 monooxygenase TRI13, converting calonectrin to 3,15-diacetoxyspirpenol, which is subsequently acetylated bythe acetyltransferase TRI7. A fourth hydroxyl group is added to C-8 by the cytochrome P450 monooxygenase TRI1, followed by the addition of an isovaleryl moiety by TRI16. Finally, the acetyl group is removed from the C-3 position by the trichothecene C-3 esterase TRI8 to produce T-2 toxin. The polypeptide is Core trichothecene cluster (CTC) protein 14 (Fusarium sporotrichioides).